A 381-amino-acid polypeptide reads, in one-letter code: Neuropeptide Y receptor type 2 (381 aa).

Residues 1-37 (MGPIGTEADENQTVEEIKVEPYGPGHTTPRGELAPDP) form a disordered region. At 1-52 (MGPIGTEADENQTVEEIKVEPYGPGHTTPRGELAPDPEPELIDSTKLTEVRV) the chain is on the extracellular side. Asparagine 11 carries an N-linked (GlcNAc...) asparagine glycan. Residues 53–73 (VLILAYCSIILLGVVGNSLVI) traverse the membrane as a helical segment. Residues 74-87 (HVVIKFKSMRTVTN) lie on the Cytoplasmic side of the membrane. The chain crosses the membrane as a helical span at residues 88 to 108 (FFIANLAVADLLVNTLCLPFT). Over 109–125 (LTYTLMGEWKMGPVLCH) the chain is Extracellular. The cysteines at positions 124 and 204 are disulfide-linked. Residues 126-146 (LVPYAQGLAVQVSTVTLTVIA) traverse the membrane as a helical segment. The Cytoplasmic portion of the chain corresponds to 147-166 (LDRHRCIVYHLDSKISKQNS). The chain crosses the membrane as a helical span at residues 167 to 187 (FLIIGLAWGISALLASPLAIF). At 188 to 217 (REYSLIEIIPDFEIVACTEKWPGEEKSIYG) the chain is on the extracellular side. Residues 218–238 (TVYSLSSLLILYVLPLGIISV) form a helical membrane-spanning segment. Over 239–269 (SYVRIWSKLKNHVSPGAANDHYHQRRQKTTK) the chain is Cytoplasmic. The chain crosses the membrane as a helical span at residues 270–290 (MLVFVVVVFAVSWLPLHAFQL). Residues 291-305 (AVDIDSQVLDLKEYK) are Extracellular-facing. The chain crosses the membrane as a helical span at residues 306–326 (LIFTVFHIIAMCSTFANPLLY). At 327 to 381 (GWMNSNYRKAFLSAFRCQQRLDAIQSEVCVTGKAKTNVEVEKNHGAADSAEATNV) the chain is on the cytoplasmic side. Residue cysteine 343 is the site of S-palmitoyl cysteine attachment.

Belongs to the G-protein coupled receptor 1 family.

It is found in the cell membrane. In terms of biological role, receptor for neuropeptide Y and peptide YY. The chain is Neuropeptide Y receptor type 2 (NPY2R) from Cavia porcellus (Guinea pig).